Reading from the N-terminus, the 662-residue chain is Glycogen debranching enzyme (662 aa).

Catalysis depends on Asp-338, which acts as the Nucleophile. Glu-373 serves as the catalytic Proton donor.

The protein belongs to the glycosyl hydrolase 13 family.

The enzyme catalyses Hydrolysis of (1-&gt;6)-alpha-D-glucosidic linkages to branches with degrees of polymerization of three or four glucose residues in limit dextrin.. It participates in glycan degradation; glycogen degradation. Its function is as follows. Removes maltotriose and maltotetraose chains that are attached by 1,6-alpha-linkage to the limit dextrin main chain, generating a debranched limit dextrin. This chain is Glycogen debranching enzyme, found in Yersinia enterocolitica serotype O:8 / biotype 1B (strain NCTC 13174 / 8081).